Consider the following 478-residue polypeptide: MGKKNKQFVEKITAMEDDFAQWYTDVVKQADLVDYGQVRGTMIIKPYGYAIWENIKNELDRMFKETGHTNVAFPLFIPESLLQKEKDHVEGFAPEVAWVTHGGEEELTERIAVRPTSEVLFCDYYSNNIHSYRDLPKLYNQWGNVVRWEKTTRPFLRSSEFHWQEGHTAHATDEEATEETNRMLETYAKLVEEYLAVPVLKGRKTDKEKFAGAKFTLTIEALMHDGKALQSGTSHHFGTGFAEAFDINYLDKDGKSQFVHQTSWGLSTRIMGALIMVHGDNRGLVVPPKIAPTQAMIVPIAQHKEGVLDKAYELRDKLAKVARVDIDGSDKMPGWKFNEYEMKGIPVRVEMGPKDIEKEQVVLVRRDTGEKEFVPVAEVETRLVELLDEVQSNLYQRALDHRNEMTTVAKDMDEFKEKIEEGGFIKAMWCGDVSCEESIKEETTATSRCIPYEEEKVADTCVCCGKKAKELVYWARAY.

This sequence belongs to the class-II aminoacyl-tRNA synthetase family. ProS type 3 subfamily. In terms of assembly, homodimer.

The protein localises to the cytoplasm. It catalyses the reaction tRNA(Pro) + L-proline + ATP = L-prolyl-tRNA(Pro) + AMP + diphosphate. Catalyzes the attachment of proline to tRNA(Pro) in a two-step reaction: proline is first activated by ATP to form Pro-AMP and then transferred to the acceptor end of tRNA(Pro). This chain is Proline--tRNA ligase, found in Oceanobacillus iheyensis (strain DSM 14371 / CIP 107618 / JCM 11309 / KCTC 3954 / HTE831).